We begin with the raw amino-acid sequence, 1386 residues long: DNA-directed RNA polymerase subunit beta'' (1386 aa).

Residues C224, C294, C301, and C304 each contribute to the Zn(2+) site.

The protein belongs to the RNA polymerase beta' chain family. RpoC2 subfamily. As to quaternary structure, in plastids the minimal PEP RNA polymerase catalytic core is composed of four subunits: alpha, beta, beta', and beta''. When a (nuclear-encoded) sigma factor is associated with the core the holoenzyme is formed, which can initiate transcription. Zn(2+) is required as a cofactor.

The protein localises to the plastid. It localises to the chloroplast. It carries out the reaction RNA(n) + a ribonucleoside 5'-triphosphate = RNA(n+1) + diphosphate. Its function is as follows. DNA-dependent RNA polymerase catalyzes the transcription of DNA into RNA using the four ribonucleoside triphosphates as substrates. The sequence is that of DNA-directed RNA polymerase subunit beta'' from Acorus calamus (Sweet flag).